The following is a 606-amino-acid chain: Probable translation initiation factor IF-2 (606 aa).

The 220-residue stretch at 11-230 (IRQPIVVVLG…LTGLVQRFMK (220 aa)) folds into the tr-type G domain. The tract at residues 20-27 (GHVDHGKT) is G1. Residue 20 to 27 (GHVDHGKT) participates in GTP binding. Positions 45 to 49 (EITQH) are G2. The tract at residues 85–88 (DTPG) is G3. GTP-binding positions include 85-89 (DTPGH) and 139-142 (NKID). A G4 region spans residues 139–142 (NKID). Residues 207 to 209 (SAK) form a G5 region.

This sequence belongs to the TRAFAC class translation factor GTPase superfamily. Classic translation factor GTPase family. IF-2 subfamily.

Functionally, function in general translation initiation by promoting the binding of the formylmethionine-tRNA to ribosomes. Seems to function along with eIF-2. The polypeptide is Probable translation initiation factor IF-2 (Staphylothermus marinus (strain ATCC 43588 / DSM 3639 / JCM 9404 / F1)).